Reading from the N-terminus, the 479-residue chain is Glutamate receptor U1 (479 aa).

Positions 1 to 17 are cleaved as a signal peptide; sequence MEKSLLFLFAVTLLSVG. The Extracellular portion of the chain corresponds to 18–163; sequence CTDAGESKGS…LFGFLTPFSK (146 aa). A glycan (N-linked (GlcNAc...) asparagine) is linked at N79. Residues 164 to 184 form a helical membrane-spanning segment; it reads ETWIGILVAYMVTSLCLFLVG. The Cytoplasmic segment spans residues 185 to 229; that stretch reads RLSPCEWTELSTEQNNFTFLNSLWFGAGAFTLQGAEPHPKSVSAR. Residues 230–250 traverse the membrane as a helical segment; sequence IIAVIWWIFSIVLVAAYIASF. The Extracellular portion of the chain corresponds to 251–414; it reads AAFLNSDSVQ…AGWNPVQPHT (164 aa). N282 carries an N-linked (GlcNAc...) asparagine glycan. Residues 415–435 traverse the membrane as a helical segment; sequence LGGIFLILGIGLALGVIAALI. Residues 436–479 are Cytoplasmic-facing; that stretch reads ELVLKARNNADQQKKSCCSAFSEEMGERLGTNKENQGAVDSVKS.

Belongs to the glutamate-gated ion channel (TC 1.A.10.1) family. As to quaternary structure, homomeric.

It is found in the cell membrane. Its subcellular location is the postsynaptic cell membrane. Functionally, receptor for glutamate. L-glutamate acts as an excitatory neurotransmitter at many synapses in the central nervous system. The postsynaptic actions of Glu are mediated by a variety of receptors that are named according to their selective agonists. This receptor binds domoate &gt; kainate &gt; AMPA &gt; NBQX &gt; glutamate. The polypeptide is Glutamate receptor U1 (kbp) (Xenopus laevis (African clawed frog)).